A 100-amino-acid chain; its full sequence is uncharacterized protein (100 aa).

The N-terminal stretch at 1–17 (MIMKYFCSVMIAIALVG) is a signal peptide. C18 is lipidated: N-palmitoyl cysteine. C18 carries the S-diacylglycerol cysteine lipid modification.

The protein localises to the cell membrane. This is an uncharacterized protein from Salmonella choleraesuis (strain SC-B67).